A 279-amino-acid polypeptide reads, in one-letter code: D-aminoacyl-tRNA deacylase (279 aa).

The disordered stretch occupies residues 81 to 100 (GRKSLTVHHPGNPTEDNSLG).

The protein belongs to the DtdA deacylase family. Monomer. Zn(2+) is required as a cofactor.

The catalysed reaction is a D-aminoacyl-tRNA + H2O = a tRNA + a D-alpha-amino acid + H(+). It catalyses the reaction glycyl-tRNA(Ala) + H2O = tRNA(Ala) + glycine + H(+). D-aminoacyl-tRNA deacylase with broad substrate specificity. By recycling D-aminoacyl-tRNA to D-amino acids and free tRNA molecules, this enzyme counteracts the toxicity associated with the formation of D-aminoacyl-tRNA entities in vivo. The sequence is that of D-aminoacyl-tRNA deacylase from Aeropyrum pernix (strain ATCC 700893 / DSM 11879 / JCM 9820 / NBRC 100138 / K1).